We begin with the raw amino-acid sequence, 342 residues long: Phosphatidate cytidylyltransferase, mitochondrial (342 aa).

It belongs to the TAM41 family. Mg(2+) serves as cofactor. Co(2+) is required as a cofactor. It depends on Cu(2+) as a cofactor.

The protein resides in the mitochondrion inner membrane. It catalyses the reaction a 1,2-diacyl-sn-glycero-3-phosphate + CTP + H(+) = a CDP-1,2-diacyl-sn-glycerol + diphosphate. Its pathway is phospholipid metabolism; CDP-diacylglycerol biosynthesis; CDP-diacylglycerol from sn-glycerol 3-phosphate: step 3/3. In terms of biological role, catalyzes the formation of CDP-diacylglycerol (CDP-DAG) from phosphatidic acid (PA) in the mitochondrial inner membrane. Required for the biosynthesis of the dimeric phospholipid cardiolipin, which stabilizes supercomplexes of the mitochondrial respiratory chain in the mitochondrial inner membrane. The chain is Phosphatidate cytidylyltransferase, mitochondrial from Drosophila melanogaster (Fruit fly).